A 516-amino-acid chain; its full sequence is Extracellular endo-inulinase inuA (516 aa).

A signal peptide spans 1 to 25 (MLNPKVAYMVWMTCLGLMLPSQAQS). Residues 40-43 (WMNE), glutamine 59, tryptophan 67, and 99-100 (FT) contribute to the substrate site. Glutamate 43 is an active-site residue. N-linked (GlcNAc...) asparagine glycosylation occurs at asparagine 109. 175-176 (RD) is a substrate binding site. N-linked (GlcNAc...) asparagine glycosylation is present at asparagine 210. Residue glutamate 233 participates in substrate binding. Residues asparagine 372 and asparagine 419 are each glycosylated (N-linked (GlcNAc...) asparagine).

The protein belongs to the glycosyl hydrolase 32 family.

The protein resides in the secreted. The catalysed reaction is Endohydrolysis of (2-&gt;1)-beta-D-fructosidic linkages in inulin.. Its activity is regulated as follows. Activity is stimulated by Mn(2+), Fe(2+) Ca(2+) metal ions and DTT; and inhibited by glucose, Mg(2+), Zn(2+), Cu(2+), Hg(2+), Al(3+), and Fe(3+). In terms of biological role, endo-inulinase involved in utilization of the plant storage polymer inulin, consisting of fructooligosaccharides with a degree of polymerization (DP) value from 2 to 60. This is Extracellular endo-inulinase inuA (inuA) from Aspergillus niger.